Consider the following 307-residue polypeptide: Coproporphyrin III ferrochelatase (307 aa).

Fe-coproporphyrin III is bound by residues tyrosine 12, arginine 29, 45 to 46 (RY), serine 53, and tyrosine 124. 2 residues coordinate Fe(2+): histidine 181 and glutamate 263.

This sequence belongs to the ferrochelatase family.

Its subcellular location is the cytoplasm. It catalyses the reaction Fe-coproporphyrin III + 2 H(+) = coproporphyrin III + Fe(2+). It participates in porphyrin-containing compound metabolism; protoheme biosynthesis. In terms of biological role, involved in coproporphyrin-dependent heme b biosynthesis. Catalyzes the insertion of ferrous iron into coproporphyrin III to form Fe-coproporphyrin III. This chain is Coproporphyrin III ferrochelatase, found in Staphylococcus epidermidis (strain ATCC 12228 / FDA PCI 1200).